A 450-amino-acid polypeptide reads, in one-letter code: 23S rRNA (uracil(1939)-C(5))-methyltransferase RlmD (450 aa).

The TRAM domain maps to 12-70; the sequence is SKQLSAKLSLNVDQLDHLGAGIAQYQGKVVFIPGALPDETVTVQLTEQKKNYARAKLIK. Residues C83, C89, C92, and C171 each contribute to the [4Fe-4S] cluster site. The S-adenosyl-L-methionine site is built by Q283, F312, N317, E333, D360, and D380. C406 (nucleophile) is an active-site residue.

This sequence belongs to the class I-like SAM-binding methyltransferase superfamily. RNA M5U methyltransferase family. RlmD subfamily.

It catalyses the reaction uridine(1939) in 23S rRNA + S-adenosyl-L-methionine = 5-methyluridine(1939) in 23S rRNA + S-adenosyl-L-homocysteine + H(+). Its function is as follows. Catalyzes the formation of 5-methyl-uridine at position 1939 (m5U1939) in 23S rRNA. In Shewanella sp. (strain W3-18-1), this protein is 23S rRNA (uracil(1939)-C(5))-methyltransferase RlmD.